Reading from the N-terminus, the 343-residue chain is Mas-related G-protein coupled receptor member F (343 aa).

Topologically, residues Met1–Pro44 are extracellular. A glycan (N-linked (GlcNAc...) asparagine) is linked at Asn4. A helical transmembrane segment spans residues Ala45 to Leu66. The Cytoplasmic portion of the chain corresponds to Trp67–Phe82. The helical transmembrane segment at Leu83 to Met104 threads the bilayer. Residues Gly105–Gly123 lie on the Extracellular side of the membrane. A helical transmembrane segment spans residues Leu124–Ser144. At Val145–Ser160 the chain is on the cytoplasmic side. Residues Ala161–Phe181 traverse the membrane as a helical segment. Residues Cys182–Asp198 are Extracellular-facing. Residues Ile199 to Leu220 traverse the membrane as a helical segment. At Ile221 to Val241 the chain is on the cytoplasmic side. The chain crosses the membrane as a helical span at residues Leu242 to Trp263. The Extracellular segment spans residues Val264 to Glu273. Residues Tyr274–Ala294 form a helical membrane-spanning segment. Residues Gly295–Ser343 are Cytoplasmic-facing. The interval Ala318–Ser343 is disordered. Polar residues predominate over residues Ala324–Ser343.

This sequence belongs to the G-protein coupled receptor 1 family. Mas subfamily.

It is found in the cell membrane. Its function is as follows. Orphan receptor. May bind to a neuropeptide and may regulate nociceptor function and/or development, including the sensation or modulation of pain. This is Mas-related G-protein coupled receptor member F (Mrgprf) from Mus musculus (Mouse).